Here is a 246-residue protein sequence, read N- to C-terminus: 14-3-3 protein eta (246 aa).

Position 2 is an N-acetylglycine (Gly2). Phosphoserine occurs at positions 25 and 59.

Belongs to the 14-3-3 family. In terms of assembly, homodimer. Interacts with many nuclear hormone receptors and cofactors including AR, ESR1, ESR2, MC2R, NR3C1, NRIP1, PPARBP and THRA. Interacts with ABL1 (phosphorylated form); the interaction retains it in the cytoplasm. Weakly interacts with CDKN1B. Interacts with ARHGEF28 and CDK16. Interacts with GAB2. Interacts with KCNK18 in a phosphorylation-dependent manner. Interacts with SAMSN1. Interacts with the 'Ser-241' phosphorylated form of PDPK1. Interacts with the 'Thr-369' phosphorylated form of DAPK2. Interacts with PI4KB, TBC1D22A and TBC1D22B. Interacts with SLITRK1. Interacts with MEFV. In terms of processing, phosphorylated on Ser-59 by protein kinase C delta type catalytic subunit in a sphingosine-dependent fashion.

Its subcellular location is the cytoplasm. Functionally, adapter protein implicated in the regulation of a large spectrum of both general and specialized signaling pathways. Binds to a large number of partners, usually by recognition of a phosphoserine or phosphothreonine motif. Binding generally results in the modulation of the activity of the binding partner. Negatively regulates the kinase activity of PDPK1. This Bos taurus (Bovine) protein is 14-3-3 protein eta (YWHAH).